The following is a 341-amino-acid chain: HTH-type transcriptional repressor PurR (341 aa).

The region spanning 2 to 56 is the HTH lacI-type domain; sequence ATIKDVAKRANVSTTTVSHVINKTRFVAEETRNAVWAAIKELHYSPSAVARSLKV. Residues 4–23 constitute a DNA-binding region (H-T-H motif); it reads IKDVAKRANVSTTTVSHVIN. The DNA-binding element occupies 48–56; the sequence is SAVARSLKV. Residues Y73, R190, T192, F221, and D275 each coordinate hypoxanthine.

As to quaternary structure, homodimer.

Its pathway is purine metabolism; purine nucleotide biosynthesis [regulation]. Is the main repressor of the genes involved in the de novo synthesis of purine nucleotides, regulating purB, purC, purEK, purF, purHD, purL, purMN and guaBA expression. PurR is allosterically activated to bind its cognate DNA by binding the purine corepressors, hypoxanthine or guanine, thereby effecting transcription repression. The protein is HTH-type transcriptional repressor PurR of Shigella dysenteriae serotype 1 (strain Sd197).